A 7639-amino-acid chain; its full sequence is Nonribosomal peptide synthetase 4 (7639 aa).

The tract at residues tryptophan 244–phenylalanine 636 is adenylation 1. Positions threonine 776–glutamate 852 constitute a Carrier 1 domain. An O-(pantetheine 4'-phosphoryl)serine modification is found at serine 813. Residues phenylalanine 865–serine 1295 are epimerization 1. The segment at valine 1337 to isoleucine 1767 is condensation 1. Residues phenylalanine 1786–leucine 2181 are adenylation 2. The region spanning alanine 2313 to serine 2389 is the Carrier 2 domain. Serine 2350 bears the O-(pantetheine 4'-phosphoryl)serine mark. Residues valine 2426 to leucine 2852 form a condensation 2 region. The interval glutamine 2878–isoleucine 3269 is adenylation 3. In terms of domain architecture, Carrier 3 spans arginine 3403–glutamate 3479. Serine 3440 bears the O-(pantetheine 4'-phosphoryl)serine mark. An epimerization 2 region spans residues alanine 3491–glutamine 3928. The segment at glutamate 3961–threonine 4389 is condensation 3. Residues phenylalanine 4407 to leucine 4810 form an adenylation 4 region. In terms of domain architecture, Carrier 4 spans alanine 4944 to glutamate 5020. O-(pantetheine 4'-phosphoryl)serine is present on serine 4981. Residues glutamine 5058–methionine 5478 form a condensation 4 region. The interval phenylalanine 5498–leucine 5900 is adenylation 5. Positions threonine 6039–glycine 6115 constitute a Carrier 5 domain. O-(pantetheine 4'-phosphoryl)serine is present on serine 6076. Residues phenylalanine 6133–leucine 6567 form an epimerization 3 region. The interval valine 6607–glutamine 7032 is condensation 5. The Carrier 6 domain occupies arginine 7088–serine 7164. At serine 7125 the chain carries O-(pantetheine 4'-phosphoryl)serine. The condensation 6 stretch occupies residues leucine 7254–arginine 7603.

The protein belongs to the NRP synthetase family.

The catalysed reaction is D-allo-threonine + D-leucine + D-alanine + L-proline + 2 L-leucine + A = fusahexin + AH2 + 6 H2O. It participates in secondary metabolite biosynthesis. Functionally, nonribosomal peptide synthetase; part of the gene cluster that mediates the biosynthesis of the fusahexin, a cyclic hydrophobic hexapeptide with the amino acid sequence cyclo-(D-Ala-L-Leu-D-allo-Thr-L-Pro-D-Leu-L-Leu) that plays an important role in cell surface hydrophobicity. Fusahexin might also play a role in virulence, sensitivity to osmotic stress and oxidative stress. NRPS4 is the only enzyme within the cluster and its 5 catalytic modules are sufficient to produce fusahexin. The modules 1 to 4 incorporate respectively D-alanine, L-leucine, D-allo-threonine, and L-proline, which is supported by the presence of epimerase domains in modules 1 and 3, which incorporate D-amino acids. The terminal module is responsible for incorporation of the two adjacent leucine units, where the epimerase domain is only used to convert the first unit to D-leucine. The terminal condensation domain (Ct) is involved in cyclization with D-alanine and thereby releasing of fusahexin. The polypeptide is Nonribosomal peptide synthetase 4 (Gibberella zeae (strain ATCC MYA-4620 / CBS 123657 / FGSC 9075 / NRRL 31084 / PH-1) (Wheat head blight fungus)).